A 247-amino-acid polypeptide reads, in one-letter code: tRNA pseudouridine synthase A (247 aa).

D52 (nucleophile) is an active-site residue. Residue Y113 participates in substrate binding.

It belongs to the tRNA pseudouridine synthase TruA family. Homodimer.

It catalyses the reaction uridine(38/39/40) in tRNA = pseudouridine(38/39/40) in tRNA. Functionally, formation of pseudouridine at positions 38, 39 and 40 in the anticodon stem and loop of transfer RNAs. The protein is tRNA pseudouridine synthase A of Bartonella bacilliformis (strain ATCC 35685 / KC583 / Herrer 020/F12,63).